Reading from the N-terminus, the 95-residue chain is MKISKEEVAYVAHLARLEFSESEMETFTFQMNEILLYMDKLNEVDTSGVEPLSHAIALHNAFREDKVQESLSQDLSLANAPDPRGEFFRVPKVID.

Belongs to the GatC family. Heterotrimer of A, B and C subunits.

The enzyme catalyses L-glutamyl-tRNA(Gln) + L-glutamine + ATP + H2O = L-glutaminyl-tRNA(Gln) + L-glutamate + ADP + phosphate + H(+). The catalysed reaction is L-aspartyl-tRNA(Asn) + L-glutamine + ATP + H2O = L-asparaginyl-tRNA(Asn) + L-glutamate + ADP + phosphate + 2 H(+). Its function is as follows. Allows the formation of correctly charged Asn-tRNA(Asn) or Gln-tRNA(Gln) through the transamidation of misacylated Asp-tRNA(Asn) or Glu-tRNA(Gln) in organisms which lack either or both of asparaginyl-tRNA or glutaminyl-tRNA synthetases. The reaction takes place in the presence of glutamine and ATP through an activated phospho-Asp-tRNA(Asn) or phospho-Glu-tRNA(Gln). This Syntrophus aciditrophicus (strain SB) protein is Aspartyl/glutamyl-tRNA(Asn/Gln) amidotransferase subunit C.